Consider the following 428-residue polypeptide: RUN domain-containing protein 3A (428 aa).

Residues 52-182 form the RUN domain; that stretch reads DDSSEEFINF…IDFSFCLKGE (131 aa). Residues 237-314 adopt a coiled-coil conformation; it reads ESWRNKCRKM…ELQEQLTSLI (78 aa). Positions 349–375 are disordered; sequence HRGSFPSPEPHISLTTGSQRTERKQNG.

Belongs to the RUNDC3 family.

The chain is RUN domain-containing protein 3A (rundc3a) from Danio rerio (Zebrafish).